The sequence spans 561 residues: Terpene synthase 3 (561 aa).

Mg(2+) contacts are provided by aspartate 315, aspartate 319, aspartate 458, and glutamate 466. The DDXXD motif motif lies at 315-319 (DDVYD).

The protein belongs to the terpene synthase family. Tpsa subfamily. Mg(2+) is required as a cofactor. Requires Mn(2+) as cofactor. As to expression, mostly expressed in stems amd leaves, and, to a lower extent, in roots and fruits.

The catalysed reaction is (2E,6E)-farnesyl diphosphate = germacrene D + diphosphate. It catalyses the reaction (2E,6E)-farnesyl diphosphate = alpha-copaene + diphosphate. Its pathway is secondary metabolite biosynthesis; terpenoid biosynthesis. Functionally, sesquiterpene synthase involved in the biosynthesis of volatile compounds that contribute to the characteristic flavors of black pepper. Mediates the conversion of (2E,6E)-farnesyl diphosphate (FPP) into alpha-copaene and germacrene D. This is Terpene synthase 3 from Piper nigrum (Black pepper).